Reading from the N-terminus, the 395-residue chain is MSKKQTTAAATAPIDILELHTQIQQFIETESKNVVVLEAKLVKINQLLECDYLRPRIIYRLKMEKEMCEKLIIEHHNLDFFNIDVAHLIEEYHMLNRTEIVLPFFSPTKDQLTQQLEHKRKKMDLEKQFLNKLKNYTHLKNFEFMMKHCEFIPKSSPPPCVCGNKTEFIKDDDRAVCAICCTEQSLISNTSSFSDVGRVNMASKYTYNRKVHFRDCITQYQGKQKTHIPEEIYTILETKLLEKNLLNTEPGLTVEKRYEKVTRAMVLDILKELGSKDVKKFYDDIVLIHHTLTKQPCDNIEYLEDSLLDDFDKLTETYDNLYVNQDSPDDERGGTKRKNFINAQFVLYQLLRKHNHPCNSMDFLTLKKSERKRFHHTICKKLFSILEWKYSYSIC.

The protein belongs to the IIV-6 282R family.

Functionally, transcription activation. The protein is Putative transcription factor 079L of Aedes vexans (Inland floodwater mosquito).